The following is a 569-amino-acid chain: Protein misato homolog 1 (569 aa).

Ser-41 and Ser-495 each carry phosphoserine.

Belongs to the misato family.

The protein localises to the mitochondrion outer membrane. It localises to the cytoplasm. Its function is as follows. Involved in the regulation of mitochondrial distribution and morphology. Required for mitochondrial fusion and mitochondrial network formation. In Macaca fascicularis (Crab-eating macaque), this protein is Protein misato homolog 1 (MSTO1).